We begin with the raw amino-acid sequence, 460 residues long: Transcription factor TGA10 (460 aa).

The span at 1–11 (MQGHHQNHHQH) shows a compositional bias: basic residues. Disordered regions lie at residues 1–29 (MQGH…NKDG) and 43–163 (LDGQ…PKTL). A compositionally biased stretch (low complexity) spans 12–21 (LSSSSATSSH). Polar residues-rich tracts occupy residues 65 to 81 (TQNL…NIFP) and 121 to 136 (DLTN…QGSK). The segment covering 138 to 162 (IKKEGNRKGLASSDHDIPKSSDPKT) has biased composition (basic and acidic residues). The bZIP domain occupies 159 to 203 (DPKTLRRLAQNREAARKSRLRKKAYVQQLESCRIKLTQLEQEIQR). A basic motif region spans residues 161–181 (KTLRRLAQNREAARKSRLRKK). The Nuclear localization signal motif lies at 163 to 170 (LRRLAQNR). A leucine-zipper region spans residues 187-201 (LESCRIKLTQLEQEI). The 220-residue stretch at 236–455 (AAVFDMEYAR…QALSSLWLAR (220 aa)) folds into the DOG1 domain.

It belongs to the bZIP family. As to quaternary structure, homodimer. Binds DNA as a dimer. Interacts with floral glutaredoxins GRXC7/ROXY1 and GRXC8/ROXY2 in the nucleus. Interacts with TGA1, TGA2, TGA3, TGA4, TGA5, TGA6, TGA7, TGA9 and PAN. Expressed at low levels in inflorescence apex and flowers.

It localises to the nucleus. Together with TGA9, basic leucine-zipper transcription factor required for anther development, probably via the activation of SPL expression in anthers and via the regulation of genes with functions in early and middle tapetal development. Required for signaling responses to pathogen-associated molecular patterns (PAMPs) such as flg22 that involves chloroplastic reactive oxygen species (ROS) production and subsequent expression of H(2)O(2)-responsive genes. This is Transcription factor TGA10 from Arabidopsis thaliana (Mouse-ear cress).